The sequence spans 383 residues: UDP-D-xylose:L-fucose alpha-1,3-D-xylosyltransferase 3 (383 aa).

The Cytoplasmic segment spans residues 1–20; it reads MAQQSQRPISNRHISLLNRN. A helical; Signal-anchor for type II membrane protein transmembrane segment spans residues 21 to 41; sequence GLILLLLLALFVILGVFLPLT. Over 42 to 383 the chain is Lumenal; that stretch reads KSSLFMFPNT…KNRGKKHKLP (342 aa). N-linked (GlcNAc...) asparagine glycosylation is found at N50, N82, and N157. Residues 180–182 carry the DXD motif motif; sequence DVD. Residues N212, N258, N301, N306, N357, and N364 are each glycosylated (N-linked (GlcNAc...) asparagine).

The protein belongs to the glycosyltransferase 77 family. Mn(2+) is required as a cofactor. The cofactor is Mg(2+). Glycosylated. As to expression, expressed around trichome support cells in the adaxial epidermis of rosette leaves, in cauline leaves, petals and both the proximal and distal ends of siliques.

Its subcellular location is the golgi apparatus membrane. Its function is as follows. Catalyzes the transfer of D-xylose from UDP-alpha-D-xylose onto L-fucose. Probably involved in the biosynthesis of rhamnogalacturonan II (RG-II) through xylosylation of the internal fucose moiety of the A-chain of RG-II, a structurally complex pectic polysaccharide of the primary cell wall. RG-II is essential for the cell wall integrity of rapidly growing tissues such as roots and pollen tube growth and elongation. The protein is UDP-D-xylose:L-fucose alpha-1,3-D-xylosyltransferase 3 of Arabidopsis thaliana (Mouse-ear cress).